The sequence spans 1366 residues: DNA-directed RNA polymerase subunit beta (1366 aa).

Belongs to the RNA polymerase beta chain family. The RNAP catalytic core consists of 2 alpha, 1 beta, 1 beta' and 1 omega subunit. When a sigma factor is associated with the core the holoenzyme is formed, which can initiate transcription.

The catalysed reaction is RNA(n) + a ribonucleoside 5'-triphosphate = RNA(n+1) + diphosphate. In terms of biological role, DNA-dependent RNA polymerase catalyzes the transcription of DNA into RNA using the four ribonucleoside triphosphates as substrates. This Polynucleobacter asymbioticus (strain DSM 18221 / CIP 109841 / QLW-P1DMWA-1) (Polynucleobacter necessarius subsp. asymbioticus) protein is DNA-directed RNA polymerase subunit beta.